The following is a 461-amino-acid chain: ATP-dependent protease ATPase subunit HslU (461 aa).

Residues Ile18 and 60 to 65 (GVGKTE) contribute to the ATP site. Positions 157–178 (EGSSVKPEPTAQQKESRQKMRK) are disordered. Residues Asp273, Glu339, and Arg411 each contribute to the ATP site.

This sequence belongs to the ClpX chaperone family. HslU subfamily. A double ring-shaped homohexamer of HslV is capped on each side by a ring-shaped HslU homohexamer. The assembly of the HslU/HslV complex is dependent on binding of ATP.

It is found in the cytoplasm. ATPase subunit of a proteasome-like degradation complex; this subunit has chaperone activity. The binding of ATP and its subsequent hydrolysis by HslU are essential for unfolding of protein substrates subsequently hydrolyzed by HslV. HslU recognizes the N-terminal part of its protein substrates and unfolds these before they are guided to HslV for hydrolysis. The polypeptide is ATP-dependent protease ATPase subunit HslU (Magnetococcus marinus (strain ATCC BAA-1437 / JCM 17883 / MC-1)).